Reading from the N-terminus, the 1149-residue chain is DNA-directed RNA polymerase III subunit RPC2 (1149 aa).

Residues Cys1095, Cys1098, Cys1107, and Cys1110 each contribute to the Zn(2+) site. A C4-type zinc finger spans residues 1095-1110 (CDKCGLMGYSGWCTTC).

The protein belongs to the RNA polymerase beta chain family. As to quaternary structure, component of the RNA polymerase III (Pol III) complex consisting of 17 subunits.

The protein resides in the nucleus. The catalysed reaction is RNA(n) + a ribonucleoside 5'-triphosphate = RNA(n+1) + diphosphate. In terms of biological role, DNA-dependent RNA polymerase catalyzes the transcription of DNA into RNA using the four ribonucleoside triphosphates as substrates. Second largest core component of RNA polymerase III which synthesizes small RNAs, such as 5S rRNA and tRNAs. Proposed to contribute to the polymerase catalytic activity and forms the polymerase active center together with the largest subunit. Pol III is composed of mobile elements and RPC2 is part of the core element with the central large cleft and probably a clamp element that moves to open and close the cleft. This is DNA-directed RNA polymerase III subunit RPC2 (RET1) from Saccharomyces cerevisiae (strain ATCC 204508 / S288c) (Baker's yeast).